The primary structure comprises 64 residues: Large ribosomal subunit protein bL35c (64 aa).

It belongs to the bacterial ribosomal protein bL35 family.

The protein resides in the plastid. The protein localises to the chloroplast. This Phaeodactylum tricornutum (strain CCAP 1055/1) protein is Large ribosomal subunit protein bL35c.